A 33-amino-acid polypeptide reads, in one-letter code: Brevinin-2DYd (33 aa).

Cysteines 27 and 33 form a disulfide.

As to expression, expressed by the skin glands.

The protein localises to the secreted. In terms of biological role, antimicrobial peptide. A mixture of Brevinin-2DYc/2DYd is active against the Gram-positive bacterium S.aureus (MIC=15 uM) and the Gram-negative bacterium E.coli (MIC=15 uM). This Rana dybowskii (Dybovsky's frog) protein is Brevinin-2DYd.